The sequence spans 243 residues: Zinc import ATP-binding protein ZnuC (243 aa).

The ABC transporter domain maps to 8-225 (LNLSNVSYYI…SEFQKLFGHH (218 aa)). 40-47 (GPNGAGKS) contributes to the ATP binding site.

Belongs to the ABC transporter superfamily. Zinc importer (TC 3.A.1.15.5) family. The complex is composed of two ATP-binding proteins (ZnuC), two transmembrane proteins (ZnuB) and a solute-binding protein (ZnuA).

It localises to the cell inner membrane. It carries out the reaction Zn(2+)(out) + ATP(in) + H2O(in) = Zn(2+)(in) + ADP(in) + phosphate(in) + H(+)(in). Functionally, part of the ABC transporter complex ZnuABC involved in zinc import. Responsible for energy coupling to the transport system. This is Zinc import ATP-binding protein ZnuC from Psychrobacter arcticus (strain DSM 17307 / VKM B-2377 / 273-4).